A 707-amino-acid polypeptide reads, in one-letter code: Elongation factor G (707 aa).

In terms of domain architecture, tr-type G spans 8–296 (ERYRNFGIMA…AVVDFLPAPT (289 aa)). GTP-binding positions include 17-24 (AHIDAGKT), 94-98 (DTPGH), and 148-151 (NKMD).

Belongs to the TRAFAC class translation factor GTPase superfamily. Classic translation factor GTPase family. EF-G/EF-2 subfamily.

The protein localises to the cytoplasm. Its function is as follows. Catalyzes the GTP-dependent ribosomal translocation step during translation elongation. During this step, the ribosome changes from the pre-translocational (PRE) to the post-translocational (POST) state as the newly formed A-site-bound peptidyl-tRNA and P-site-bound deacylated tRNA move to the P and E sites, respectively. Catalyzes the coordinated movement of the two tRNA molecules, the mRNA and conformational changes in the ribosome. This Paracoccus denitrificans (strain Pd 1222) protein is Elongation factor G.